Consider the following 126-residue polypeptide: Phosphoribosyl-AMP cyclohydrolase (126 aa).

Residue Asp-76 coordinates Mg(2+). Cys-77 contacts Zn(2+). 2 residues coordinate Mg(2+): Asp-78 and Asp-80. Zn(2+)-binding residues include Cys-94 and Cys-101.

Belongs to the PRA-CH family. In terms of assembly, homodimer. It depends on Mg(2+) as a cofactor. The cofactor is Zn(2+).

Its subcellular location is the cytoplasm. It catalyses the reaction 1-(5-phospho-beta-D-ribosyl)-5'-AMP + H2O = 1-(5-phospho-beta-D-ribosyl)-5-[(5-phospho-beta-D-ribosylamino)methylideneamino]imidazole-4-carboxamide. The protein operates within amino-acid biosynthesis; L-histidine biosynthesis; L-histidine from 5-phospho-alpha-D-ribose 1-diphosphate: step 3/9. Its function is as follows. Catalyzes the hydrolysis of the adenine ring of phosphoribosyl-AMP. This Vesicomyosocius okutanii subsp. Calyptogena okutanii (strain HA) protein is Phosphoribosyl-AMP cyclohydrolase.